Reading from the N-terminus, the 718-residue chain is Putative methyltransferase NSUN7 (718 aa).

C439 (nucleophile) is an active-site residue. Disordered regions lie at residues 536-557 (GKSS…KGAT), 578-616 (ANLS…PAVP), and 694-718 (SLSR…RRWL). The segment covering 538-549 (SSKREKKKKKSK) has biased composition (basic residues). The span at 591 to 604 (QKNTAQVGASSQTR) shows a compositional bias: polar residues. A compositionally biased stretch (basic and acidic residues) spans 696-706 (SRKEEKPKDDT).

It belongs to the class I-like SAM-binding methyltransferase superfamily. RsmB/NOP family.

Functionally, may have S-adenosyl-L-methionine-dependent methyl-transferase activity. In Homo sapiens (Human), this protein is Putative methyltransferase NSUN7 (NSUN7).